Consider the following 122-residue polypeptide: MKRAYRLRTPEQYQRVRRDGRTWDAGMLMLNAAPNRRRLSRCGFVTPKRLGGAVTRNRIRRRVREAVRLLYPQIVPGWDIVFIARSPALAEIAFPQLQALVQQALQRAGVLQASDSGQSDMG.

It belongs to the RnpA family. In terms of assembly, consists of a catalytic RNA component (M1 or rnpB) and a protein subunit.

It carries out the reaction Endonucleolytic cleavage of RNA, removing 5'-extranucleotides from tRNA precursor.. In terms of biological role, RNaseP catalyzes the removal of the 5'-leader sequence from pre-tRNA to produce the mature 5'-terminus. It can also cleave other RNA substrates such as 4.5S RNA. The protein component plays an auxiliary but essential role in vivo by binding to the 5'-leader sequence and broadening the substrate specificity of the ribozyme. The polypeptide is Ribonuclease P protein component (Roseiflexus sp. (strain RS-1)).